The sequence spans 372 residues: Nucleosome assembly protein 1;1 (372 aa).

Positions 26-80 form a coiled coil; it reads VNALKNKLQNLAGQRSDVLENLTPNVRKRVDALRDIQSQHDELEAKFREERAILE. Ser-41 is modified (phosphoserine). Residues 47–62 carry the Nuclear export signal motif; the sequence is LTPNVRKRVDALRDIQ. Positions 223 to 228 match the Nuclear localization signal motif; that stretch reads KKKPKK. Residues 299–372 are disordered; the sequence is AMEAEDFEID…DERPPECKQQ (74 aa). Acidic residues predominate over residues 300 to 337; it reads MEAEDFEIDDDEEDDIDEDEDEEDEEDEEDDDDEDEEE. Positions 360–372 are enriched in basic and acidic residues; the sequence is GKQDERPPECKQQ. The residue at position 369 (Cys-369) is a Cysteine methyl ester. Cys-369 carries the S-farnesyl cysteine lipid modification. Positions 370–372 are cleaved as a propeptide — removed in mature form; it reads KQQ.

Belongs to the nucleosome assembly protein (NAP) family. Can form homomeric and heteromeric protein complexes with NAP1;2, NAP1;3 and NAP1;4. Binds histone H2A. Interacts with PP438/PNM1. In terms of processing, prenylation of the protein is required for its function during the cell proliferation phase of leaf development. As to expression, ubiquitous.

It is found in the nucleus. The protein localises to the cytoplasm. Functionally, may modulate chromatin structure by regulation of nucleosome assembly/disassembly. Contributes to the regulation of cell proliferation and cell expansion. May function in nucleotide excision repair (NER). Involved in somatic homologous recombination. This chain is Nucleosome assembly protein 1;1 (NAP1;1), found in Arabidopsis thaliana (Mouse-ear cress).